Here is a 239-residue protein sequence, read N- to C-terminus: tRNA (guanine-N(1)-)-methyltransferase (239 aa).

S-adenosyl-L-methionine contacts are provided by residues G108 and 127-132 (LGDYVL).

It belongs to the RNA methyltransferase TrmD family. As to quaternary structure, homodimer.

Its subcellular location is the cytoplasm. The catalysed reaction is guanosine(37) in tRNA + S-adenosyl-L-methionine = N(1)-methylguanosine(37) in tRNA + S-adenosyl-L-homocysteine + H(+). In terms of biological role, specifically methylates guanosine-37 in various tRNAs. The polypeptide is tRNA (guanine-N(1)-)-methyltransferase (Streptococcus pneumoniae serotype 2 (strain D39 / NCTC 7466)).